Here is a 383-residue protein sequence, read N- to C-terminus: Lipid-A-disaccharide synthase (383 aa).

Belongs to the LpxB family.

The enzyme catalyses a lipid X + a UDP-2-N,3-O-bis[(3R)-3-hydroxyacyl]-alpha-D-glucosamine = a lipid A disaccharide + UDP + H(+). It participates in bacterial outer membrane biogenesis; LPS lipid A biosynthesis. Condensation of UDP-2,3-diacylglucosamine and 2,3-diacylglucosamine-1-phosphate to form lipid A disaccharide, a precursor of lipid A, a phosphorylated glycolipid that anchors the lipopolysaccharide to the outer membrane of the cell. This Anaeromyxobacter dehalogenans (strain 2CP-1 / ATCC BAA-258) protein is Lipid-A-disaccharide synthase.